The sequence spans 154 residues: uncharacterized protein (154 aa).

Positions 1-143 (MTESERALLT…LRKLAGSLTK (143 aa)) constitute an HTH marR-type domain. Residues 57–80 (LSKLAMSLDLKPASVTRMTDILYK) constitute a DNA-binding region (H-T-H motif).

This is an uncharacterized protein from Bacillus subtilis (strain 168).